We begin with the raw amino-acid sequence, 242 residues long: Small ribosomal subunit protein uS2 (242 aa).

It belongs to the universal ribosomal protein uS2 family.

The sequence is that of Small ribosomal subunit protein uS2 from Aeromonas hydrophila subsp. hydrophila (strain ATCC 7966 / DSM 30187 / BCRC 13018 / CCUG 14551 / JCM 1027 / KCTC 2358 / NCIMB 9240 / NCTC 8049).